A 220-amino-acid polypeptide reads, in one-letter code: Iron-sulfur flavoprotein AF_1436 (220 aa).

Residues cysteine 47, cysteine 50, cysteine 53, and cysteine 59 each contribute to the [4Fe-4S] cluster site.

Belongs to the SsuE family. Isf subfamily. In terms of assembly, homodimer. FMN is required as a cofactor. [4Fe-4S] cluster serves as cofactor.

Its function is as follows. Redox-active protein probably involved in electron transport. This Archaeoglobus fulgidus (strain ATCC 49558 / DSM 4304 / JCM 9628 / NBRC 100126 / VC-16) protein is Iron-sulfur flavoprotein AF_1436.